The following is a 391-amino-acid chain: 8-amino-7-oxononanoate synthase (391 aa).

Substrate is bound at residue arginine 19. 106-107 (GY) is a binding site for pyridoxal 5'-phosphate. Substrate is bound at residue histidine 131. Residues serine 178, histidine 206, and threonine 234 each contribute to the pyridoxal 5'-phosphate site. Lysine 237 bears the N6-(pyridoxal phosphate)lysine mark. Residue threonine 353 participates in substrate binding.

The protein belongs to the class-II pyridoxal-phosphate-dependent aminotransferase family. BioF subfamily. In terms of assembly, homodimer. Pyridoxal 5'-phosphate serves as cofactor.

The catalysed reaction is 6-carboxyhexanoyl-[ACP] + L-alanine + H(+) = (8S)-8-amino-7-oxononanoate + holo-[ACP] + CO2. It participates in cofactor biosynthesis; biotin biosynthesis. Functionally, catalyzes the decarboxylative condensation of pimeloyl-[acyl-carrier protein] and L-alanine to produce 8-amino-7-oxononanoate (AON), [acyl-carrier protein], and carbon dioxide. This Pelobacter propionicus (strain DSM 2379 / NBRC 103807 / OttBd1) protein is 8-amino-7-oxononanoate synthase.